A 438-amino-acid polypeptide reads, in one-letter code: tRNA(Ile)-lysidine synthase (438 aa).

27-32 (SGGVDS) contributes to the ATP binding site.

This sequence belongs to the tRNA(Ile)-lysidine synthase family.

The protein resides in the cytoplasm. The catalysed reaction is cytidine(34) in tRNA(Ile2) + L-lysine + ATP = lysidine(34) in tRNA(Ile2) + AMP + diphosphate + H(+). In terms of biological role, ligates lysine onto the cytidine present at position 34 of the AUA codon-specific tRNA(Ile) that contains the anticodon CAU, in an ATP-dependent manner. Cytidine is converted to lysidine, thus changing the amino acid specificity of the tRNA from methionine to isoleucine. The polypeptide is tRNA(Ile)-lysidine synthase (Vibrio parahaemolyticus serotype O3:K6 (strain RIMD 2210633)).